The sequence spans 283 residues: Pre-protein-C8 (283 aa).

Positions 1-40 (MKEDNNTSEESGRINRRNVLKTVGAAGLFAAGSTGMAAAA) form a signal peptide, tat-type signal. Positions 61-75 (ARELAKTPAFRELAQ) are helix-loop-helix (HLH) region.

Immunity protein HalI interacts with Halocin-C8; the interaction is direct. Predicted to be exported by the Tat system. The position of the signal peptide cleavage has not been experimentally proven.

It is found in the secreted. It localises to the cell membrane. Has antibacterial activity against a wide variety of haloarchaeons. Causes cell lysis and death, possibly by disrupting the cell wall. In terms of biological role, acts as an immunity protein for halocin-C8. Able to block the halocin-C8 activity by sequestering the activity of halocin-C8 through specific and direct binding. The polypeptide is Pre-protein-C8 (proC8) (Halobacterium sp. (strain AS7092)).